Reading from the N-terminus, the 122-residue chain is Large ribosomal subunit protein uL14c (122 aa).

This sequence belongs to the universal ribosomal protein uL14 family. Part of the 50S ribosomal subunit.

It is found in the plastid. The protein resides in the chloroplast. Its function is as follows. Binds to 23S rRNA. The protein is Large ribosomal subunit protein uL14c of Staurastrum punctulatum (Green alga).